A 224-amino-acid polypeptide reads, in one-letter code: UPF0758 protein VFMJ11_0123 (224 aa).

In terms of domain architecture, MPN spans 102-224 (ALTSPEHTKR…IVSFAERGWI (123 aa)). His173, His175, and Asp186 together coordinate Zn(2+). The JAMM motif signature appears at 173–186 (HNHPSGVAEPSQAD).

It belongs to the UPF0758 family.

This chain is UPF0758 protein VFMJ11_0123, found in Aliivibrio fischeri (strain MJ11) (Vibrio fischeri).